The following is a 146-amino-acid chain: UPF0735 ACT domain-containing protein CHY_1913 (146 aa).

Positions 70-145 (TLALNLEHRA…GVSKVELVGQ (76 aa)) constitute an ACT domain.

It belongs to the UPF0735 family.

This chain is UPF0735 ACT domain-containing protein CHY_1913, found in Carboxydothermus hydrogenoformans (strain ATCC BAA-161 / DSM 6008 / Z-2901).